The following is a 237-amino-acid chain: tRNA1(Val) (adenine(37)-N6)-methyltransferase (237 aa).

This sequence belongs to the methyltransferase superfamily. tRNA (adenine-N(6)-)-methyltransferase family.

It localises to the cytoplasm. The enzyme catalyses adenosine(37) in tRNA1(Val) + S-adenosyl-L-methionine = N(6)-methyladenosine(37) in tRNA1(Val) + S-adenosyl-L-homocysteine + H(+). Its function is as follows. Specifically methylates the adenine in position 37 of tRNA(1)(Val) (anticodon cmo5UAC). The chain is tRNA1(Val) (adenine(37)-N6)-methyltransferase from Tolumonas auensis (strain DSM 9187 / NBRC 110442 / TA 4).